A 112-amino-acid polypeptide reads, in one-letter code: uncharacterized protein (112 aa).

A helical membrane pass occupies residues 85–105 (IVQLIILFAIIITNPNAIELI).

The protein belongs to the M.jannaschii MJ0023/MJ0349/MJ1072/MJ1074/MJ1107/MJECL16 family.

It is found in the membrane. This is an uncharacterized protein from Methanocaldococcus jannaschii (strain ATCC 43067 / DSM 2661 / JAL-1 / JCM 10045 / NBRC 100440) (Methanococcus jannaschii).